Consider the following 540-residue polypeptide: 2,3-bisphosphoglycerate-independent phosphoglycerate mutase (540 aa).

Residues aspartate 13 and serine 63 each contribute to the Mn(2+) site. The active-site Phosphoserine intermediate is the serine 63. Substrate contacts are provided by residues histidine 124, 154–155 (RD), arginine 186, arginine 192, 262–265 (RPDR), and lysine 356. Mn(2+) contacts are provided by aspartate 423, histidine 427, aspartate 464, histidine 465, and histidine 483.

Belongs to the BPG-independent phosphoglycerate mutase family. Monomer. It depends on Mn(2+) as a cofactor.

It carries out the reaction (2R)-2-phosphoglycerate = (2R)-3-phosphoglycerate. It participates in carbohydrate degradation; glycolysis; pyruvate from D-glyceraldehyde 3-phosphate: step 3/5. Its function is as follows. Catalyzes the interconversion of 2-phosphoglycerate and 3-phosphoglycerate. This chain is 2,3-bisphosphoglycerate-independent phosphoglycerate mutase, found in Chloroflexus aurantiacus (strain ATCC 29366 / DSM 635 / J-10-fl).